A 558-amino-acid polypeptide reads, in one-letter code: T-complex protein 1 subunit eta (558 aa).

The segment at 524–558 is disordered; that stretch reads VRNPKSEQPKAPPGGLRRGGPQGMAGLAKNARLGK.

It belongs to the TCP-1 chaperonin family. In terms of assembly, heterooligomeric complex of about 850 to 900 kDa that forms two stacked rings, 12 to 16 nm in diameter.

It localises to the cytoplasm. Functionally, molecular chaperone; assists the folding of proteins upon ATP hydrolysis. Known to play a role, in vitro, in the folding of actin and tubulin. The chain is T-complex protein 1 subunit eta from Tetrahymena pyriformis.